A 376-amino-acid polypeptide reads, in one-letter code: Putative phosphoserine aminotransferase (376 aa).

An L-glutamate-binding site is contributed by R50. Residues A84–T85, F108, T154, D176, and Q199 each bind pyridoxal 5'-phosphate. Position 200 is an N6-(pyridoxal phosphate)lysine (K200). N251–T252 is a pyridoxal 5'-phosphate binding site.

The protein belongs to the class-V pyridoxal-phosphate-dependent aminotransferase family. SerC subfamily. Homodimer. It depends on pyridoxal 5'-phosphate as a cofactor.

The protein resides in the cytoplasm. The catalysed reaction is O-phospho-L-serine + 2-oxoglutarate = 3-phosphooxypyruvate + L-glutamate. It carries out the reaction 4-(phosphooxy)-L-threonine + 2-oxoglutarate = (R)-3-hydroxy-2-oxo-4-phosphooxybutanoate + L-glutamate. It functions in the pathway amino-acid biosynthesis; L-serine biosynthesis; L-serine from 3-phospho-D-glycerate: step 2/3. Its pathway is cofactor biosynthesis; pyridoxine 5'-phosphate biosynthesis; pyridoxine 5'-phosphate from D-erythrose 4-phosphate: step 3/5. In terms of biological role, catalyzes the reversible conversion of 3-phosphohydroxypyruvate to phosphoserine and of 3-hydroxy-2-oxo-4-phosphonooxybutanoate to phosphohydroxythreonine. The chain is Putative phosphoserine aminotransferase from Mycobacterium bovis (strain ATCC BAA-935 / AF2122/97).